A 726-amino-acid polypeptide reads, in one-letter code: Dipeptidyl-peptidase 5 (726 aa).

The signal sequence occupies residues 1–19 (MAPAKWLIASLAFASTGLA). Asn96 and Asn252 each carry an N-linked (GlcNAc...) asparagine glycan. Residues 268-292 (VAEPINKRNGPRTPHGIEGASSSPV) form a disordered region. An N-linked (GlcNAc...) asparagine glycan is attached at Asn485. Residue Ser558 is the Charge relay system of the active site. N-linked (GlcNAc...) asparagine glycosylation occurs at Asn605. Active-site charge relay system residues include Asp641 and His673. An N-linked (GlcNAc...) asparagine glycan is attached at Asn699.

Belongs to the peptidase S9C family.

It is found in the secreted. Its function is as follows. Extracellular dipeptidyl-peptidase which removes N-terminal dipeptides sequentially from polypeptides having unsubstituted N-termini. Contributes to pathogenicity. This Arthroderma otae (strain ATCC MYA-4605 / CBS 113480) (Microsporum canis) protein is Dipeptidyl-peptidase 5 (DPP5).